A 199-amino-acid chain; its full sequence is ParB-like protein Saci_1498 (199 aa).

It belongs to the ParB family.

In terms of biological role, probably part of a 4-gene DNA damage response locus in which the upstream ups system, in combination with this downstream locus, functions in homologous recombination to rescue Sulfolobales from DNA-damaging threats. This protein might function in the DNA transfer machinery. The chain is ParB-like protein Saci_1498 from Sulfolobus acidocaldarius (strain ATCC 33909 / DSM 639 / JCM 8929 / NBRC 15157 / NCIMB 11770).